The primary structure comprises 868 residues: Probable inorganic carbon transporter subunit DabA (868 aa).

Zn(2+) is bound by residues Cys-392, Asp-394, His-574, and Cys-589.

Belongs to the inorganic carbon transporter (TC 9.A.2) DabA family. As to quaternary structure, forms a complex with DabB. Requires Zn(2+) as cofactor.

Its subcellular location is the cell membrane. In terms of biological role, part of an energy-coupled inorganic carbon pump. The protein is Probable inorganic carbon transporter subunit DabA of Bacillus cereus (strain B4264).